A 116-amino-acid polypeptide reads, in one-letter code: Protein Wnt-5b (116 aa).

Serine 1 is lipidated: O-palmitoleoyl serine; by PORCN. N-linked (GlcNAc...) asparagine glycosylation is found at asparagine 69 and asparagine 83. Cysteines 82 and 97 form a disulfide.

Belongs to the Wnt family. Palmitoleoylation is required for efficient binding to frizzled receptors. Depalmitoleoylation leads to Wnt signaling pathway inhibition.

It localises to the secreted. Its subcellular location is the extracellular space. The protein localises to the extracellular matrix. In terms of biological role, ligand for members of the frizzled family of seven transmembrane receptors. Probable developmental protein. May be a signaling molecule which affects the development of discrete regions of tissues. Is likely to signal over only few cell diameters. This is Protein Wnt-5b (WNT-5B) from Plestiodon skiltonianus (Western skink).